Reading from the N-terminus, the 366-residue chain is 1-aminocyclopropane-1-carboxylate oxidase homolog 12 (366 aa).

Residues 215–314 form the Fe2OG dioxygenase domain; sequence KTLLMICHYY…RISVASFFSS (100 aa). Fe cation is bound by residues His239, Asp241, and His295. Arg305 provides a ligand contact to 2-oxoglutarate.

Belongs to the iron/ascorbate-dependent oxidoreductase family. Fe(2+) is required as a cofactor.

The sequence is that of 1-aminocyclopropane-1-carboxylate oxidase homolog 12 from Arabidopsis thaliana (Mouse-ear cress).